We begin with the raw amino-acid sequence, 130 residues long: MSGRAKQGGKARAKAKSRSFRAGLQFPVGRVHRLLRQGNYAERIGAGTPVYLAAVLEYLTAEILELAGNAARDNKKTRIIPRHLQLAIRNDEELNKLLGRVTIAQGGVLPNIQAVLLPKKTESHHKSQTK.

Serine 2 carries the post-translational modification Phosphoserine; by RPS6KA5. Arginine 4 is subject to Citrulline; alternate. At arginine 4 the chain carries Symmetric dimethylarginine; by PRMT5; alternate. An N6-(2-hydroxyisobutyryl)lysine; alternate mark is found at lysine 6 and lysine 10. Lysine 6 and lysine 10 each carry N6-acetyllysine; alternate. Lysine 10 is subject to N6-lactoyllysine; alternate. 3 positions are modified to N6-(2-hydroxyisobutyryl)lysine: lysine 75, lysine 76, and lysine 96. The residue at position 96 (lysine 96) is an N6-glutaryllysine; alternate. Position 105 is an N5-methylglutamine (glutamine 105). Residue lysine 119 is modified to N6-(2-hydroxyisobutyryl)lysine; alternate. An N6-glutaryllysine; alternate mark is found at lysine 119 and lysine 120. Lysine 119 carries the post-translational modification N6-crotonyllysine; alternate. The residue at position 120 (lysine 120) is an N6-crotonyllysine. At threonine 121 the chain carries Phosphothreonine; by DCAF1. N6-glutaryllysine; alternate is present on lysine 126. N6-crotonyllysine; alternate is present on lysine 126. A [ST]-Q motif motif is present at residues serine 127 to glutamine 128.

Belongs to the histone H2A family. As to quaternary structure, the nucleosome is a histone octamer containing two molecules each of H2A, H2B, H3 and H4 assembled in one H3-H4 heterotetramer and two H2A-H2B heterodimers. The octamer wraps approximately 147 bp of DNA. Post-translationally, deiminated on Arg-4 in granulocytes upon calcium entry. In terms of processing, monoubiquitination of Lys-120 (H2AK119Ub) by RING1, TRIM37 and RNF2/RING2 complex gives a specific tag for epigenetic transcriptional repression and participates in X chromosome inactivation of female mammals. It is involved in the initiation of both imprinted and random X inactivation. Ubiquitinated H2A is enriched in inactive X chromosome chromatin. Ubiquitination of H2A functions downstream of methylation of 'Lys-27' of histone H3 (H3K27me). H2AK119Ub by RNF2/RING2 can also be induced by ultraviolet and may be involved in DNA repair. Following DNA double-strand breaks (DSBs), it is ubiquitinated through 'Lys-63' linkage of ubiquitin moieties by the E2 ligase UBE2N and the E3 ligases RNF8 and RNF168, leading to the recruitment of repair proteins to sites of DNA damage. Ubiquitination at Lys-14 and Lys-16 (H2AK13Ub and H2AK15Ub, respectively) in response to DNA damage is initiated by RNF168 that mediates monoubiquitination at these 2 sites, and 'Lys-63'-linked ubiquitin are then conjugated to monoubiquitin; RNF8 is able to extend 'Lys-63'-linked ubiquitin chains in vitro. H2AK119Ub and ionizing radiation-induced 'Lys-63'-linked ubiquitination (H2AK13Ub and H2AK15Ub) are distinct events. Phosphorylation on Ser-2 (H2AS1ph) is enhanced during mitosis. Phosphorylation on Ser-2 by RPS6KA5/MSK1 directly represses transcription. Acetylation of H3 inhibits Ser-2 phosphorylation by RPS6KA5/MSK1. Phosphorylation at Thr-121 (H2AT120ph) by DCAF1 is present in the regulatory region of many tumor suppresor genes and down-regulates their transcription. Post-translationally, symmetric dimethylation on Arg-4 by the PRDM1/PRMT5 complex may play a crucial role in the germ-cell lineage. In terms of processing, glutamine methylation at Gln-105 (H2AQ104me) by FBL is specifically dedicated to polymerase I. It is present at 35S ribosomal DNA locus and impairs binding of the FACT complex. Crotonylation (Kcr) is specifically present in male germ cells and marks testis-specific genes in post-meiotic cells, including X-linked genes that escape sex chromosome inactivation in haploid cells. Crotonylation marks active promoters and enhancers and confers resistance to transcriptional repressors. It is also associated with post-meiotically activated genes on autosomes. Post-translationally, lactylated in macrophages by EP300/P300 by using lactoyl-CoA directly derived from endogenous or exogenous lactate, leading to stimulates gene transcription. In terms of tissue distribution, testis.

The protein localises to the nucleus. Its subcellular location is the chromosome. Functionally, core component of nucleosome. Nucleosomes wrap and compact DNA into chromatin, limiting DNA accessibility to the cellular machineries which require DNA as a template. Histones thereby play a central role in transcription regulation, DNA repair, DNA replication and chromosomal stability. DNA accessibility is regulated via a complex set of post-translational modifications of histones, also called histone code, and nucleosome remodeling. In Rattus norvegicus (Rat), this protein is Histone H2A type 4.